The primary structure comprises 88 residues: UPF0297 protein STER_1937 (88 aa).

It belongs to the UPF0297 family.

This chain is UPF0297 protein STER_1937, found in Streptococcus thermophilus (strain ATCC BAA-491 / LMD-9).